Reading from the N-terminus, the 142-residue chain is Large ribosomal subunit protein uL13 (142 aa).

The protein belongs to the universal ribosomal protein uL13 family. Part of the 50S ribosomal subunit.

Its function is as follows. This protein is one of the early assembly proteins of the 50S ribosomal subunit, although it is not seen to bind rRNA by itself. It is important during the early stages of 50S assembly. The sequence is that of Large ribosomal subunit protein uL13 from Syntrophus aciditrophicus (strain SB).